The sequence spans 80 residues: Cell division protein ZapB (80 aa).

Residues 3–80 (FEVLEQLESK…ALLGKMDEVE (78 aa)) adopt a coiled-coil conformation. The span at 41-53 (ANELRSQREELEQ) shows a compositional bias: basic and acidic residues. The segment at 41-60 (ANELRSQREELEQKSQQAQQ) is disordered.

Belongs to the ZapB family. Homodimer. The ends of the coiled-coil dimer bind to each other, forming polymers. Interacts with FtsZ.

It localises to the cytoplasm. In terms of biological role, non-essential, abundant cell division factor that is required for proper Z-ring formation. It is recruited early to the divisome by direct interaction with FtsZ, stimulating Z-ring assembly and thereby promoting cell division earlier in the cell cycle. Its recruitment to the Z-ring requires functional FtsA or ZipA. This is Cell division protein ZapB from Vibrio campbellii (strain ATCC BAA-1116).